The following is a 520-amino-acid chain: Keratin, type II cytoskeletal 72 (520 aa).

Residues 1-133 (MSRQLTLYPG…DPEIQKVRAQ (133 aa)) form a head region. Residues 134-169 (EREQIKALNNKFASFIDKVRFLEQQNQVLETKWELL) are coil 1A. The region spanning 134-447 (EREQIKALNN…KLLESEESRM (314 aa)) is the IF rod domain. Residues 170–188 (QQLDLNNSKRSLEPVHESY) are linker 1. The coil 1B stretch occupies residues 189 to 280 (ISNLQKQLEI…VLFEGEIAQM (92 aa)). Positions 281-304 (QSHISDTSVILSMDNNRQLDLDSI) are linker 12. The segment at 305–443 (LAEVRAQYEE…ATYRKLLESE (139 aa)) is coil 2. The tail stretch occupies residues 444–520 (ESRMAGEYPN…SSGTTKKTSR (77 aa)). The tract at residues 494 to 520 (KGSCGSELKDPPAKTSGSSGTTKKTSR) is disordered. The segment covering 507–520 (KTSGSSGTTKKTSR) has biased composition (low complexity).

This sequence belongs to the intermediate filament family. In terms of assembly, heterotetramer of two type I and two type II keratins.

Its function is as follows. Has a role in hair formation. Specific component of keratin intermediate filaments in the inner root sheath (IRS) of the hair follicle. The sequence is that of Keratin, type II cytoskeletal 72 (Krt72) from Mus musculus (Mouse).